The following is a 460-amino-acid chain: MTLRIFDTGTRTLRDFKPVQPGHASVYLCGATPQSSPHIGHVRSAVAFDILRRWLMAKGLDVAFVRNVTDIDDKILTKASENGRPWWEWVSTYEREFTWTYNTLGVLPPSTEPRATGHVTQMIEYMQRLIDNGFAYAVDGSVYFDVAAWSKAEGSDYGSLSGNRVEDMEQGEPDNFGKRGPQDFALWKAAKPGEPSWPTPWGDGRPGWHLECSAMATYYLGEQFDIHCGGLDLQFPHHENEIAQAHAAGDKFANYWMHNHWVTMAGEKMSKSLGNVLAVPEMLKQVRPVELRYYLGSAHYRSVLEYSESALSEAAVGYRRIESFLERVGDVEVGEWTPGFEAAMDEDIAVPKALAEIHNAVREGNAALDKGDREAAKKLASSVRAMTGVLGFDPVEWGSDAGADGKADKALDVLISSELERRATARAEKNWTVADEVRDRLADAGIEVVDTADGATWKLQ.

Position 29 (cysteine 29) interacts with Zn(2+). The 'HIGH' region signature appears at 31–41 (ATPQSSPHIGH). Residues cysteine 212, histidine 237, and glutamate 241 each coordinate Zn(2+). A 'KMSKS' region motif is present at residues 268–272 (KMSKS). Lysine 271 contributes to the ATP binding site.

The protein belongs to the class-I aminoacyl-tRNA synthetase family. Monomer. The cofactor is Zn(2+).

The protein localises to the cytoplasm. The enzyme catalyses tRNA(Cys) + L-cysteine + ATP = L-cysteinyl-tRNA(Cys) + AMP + diphosphate. The sequence is that of Cysteine--tRNA ligase from Corynebacterium glutamicum (strain R).